Here is a 482-residue protein sequence, read N- to C-terminus: Argininosuccinate synthase (482 aa).

ATP-binding positions include 17-25 and alanine 43; that span reads AFSGGLDTS. Tyrosine 99 is an L-citrulline binding site. Glycine 129 and threonine 131 together coordinate ATP. L-aspartate is bound by residues threonine 131, asparagine 135, and aspartate 136. Asparagine 135 is an L-citrulline binding site. Aspartate 136 serves as a coordination point for ATP. L-citrulline contacts are provided by arginine 139 and serine 192. Aspartate 194 is a binding site for ATP. The L-citrulline site is built by threonine 201, glutamate 203, and glutamate 280. Residues 461–482 are disordered; it reads SRGEATDEETMLDRAAMESGTD.

The protein belongs to the argininosuccinate synthase family. Type 2 subfamily. Homotetramer.

It is found in the cytoplasm. The enzyme catalyses L-citrulline + L-aspartate + ATP = 2-(N(omega)-L-arginino)succinate + AMP + diphosphate + H(+). Its pathway is amino-acid biosynthesis; L-arginine biosynthesis; L-arginine from L-ornithine and carbamoyl phosphate: step 2/3. This chain is Argininosuccinate synthase (argG), found in Streptomyces lavendulae.